Consider the following 57-residue polypeptide: Small ribosomal subunit protein bS21 (57 aa).

Belongs to the bacterial ribosomal protein bS21 family.

The sequence is that of Small ribosomal subunit protein bS21 from Lysinibacillus sphaericus (strain C3-41).